The sequence spans 601 residues: Potassium-transporting ATPase potassium-binding subunit (601 aa).

A run of 12 helical transmembrane segments spans residues 3 to 23, 62 to 82, 132 to 152, 179 to 199, 283 to 303, 314 to 334, 367 to 387, 397 to 417, 419 to 439, 459 to 479, 523 to 543, and 564 to 584; these read ASAWGLLALFLSVLGLLAWPL, HYALALLAFNALGVFAVYALQ, LGLSVQNFLSAATGIAVAFAL, AWVLVPLSFVLAVFLAGQGVI, LTNLAQMLAIFLVPAALCFAF, VAILAAMTLMFVVAVVAVTAA, FGISASALFAAVTTAASCGAV, LGGMVPMVLMQLGEVVFGGAG, GLYGMLVFAILAVFIAGLMIG, VAILVTPLLVLVGTAVAVLAP, VLLALAMWFGRFGVIVPVLAI, and GPLFVALLVFTVLLVGLLNYV.

This sequence belongs to the KdpA family. In terms of assembly, the system is composed of three essential subunits: KdpA, KdpB and KdpC.

Its subcellular location is the cell inner membrane. Part of the high-affinity ATP-driven potassium transport (or Kdp) system, which catalyzes the hydrolysis of ATP coupled with the electrogenic transport of potassium into the cytoplasm. This subunit binds the periplasmic potassium ions and delivers the ions to the membrane domain of KdpB through an intramembrane tunnel. The polypeptide is Potassium-transporting ATPase potassium-binding subunit (Paracidovorax citrulli (strain AAC00-1) (Acidovorax citrulli)).